Here is a 333-residue protein sequence, read N- to C-terminus: Holliday junction branch migration complex subunit RuvB (333 aa).

A large ATPase domain (RuvB-L) region spans residues 1-182 (MDERLLSGES…FGVLSRLEYY (182 aa)). ATP-binding positions include L21, R22, G63, K66, T67, T68, 129–131 (EDF), R172, Y182, and R219. Mg(2+) is bound at residue T67. The segment at 183 to 253 (TVDQLSEIVE…ITQMALELLQ (71 aa)) is small ATPAse domain (RuvB-S). The tract at residues 256 to 333 (KLGLDHIDHK…EHFGMEMPKV (78 aa)) is head domain (RuvB-H). DNA-binding residues include R311 and R316.

It belongs to the RuvB family. In terms of assembly, homohexamer. Forms an RuvA(8)-RuvB(12)-Holliday junction (HJ) complex. HJ DNA is sandwiched between 2 RuvA tetramers; dsDNA enters through RuvA and exits via RuvB. An RuvB hexamer assembles on each DNA strand where it exits the tetramer. Each RuvB hexamer is contacted by two RuvA subunits (via domain III) on 2 adjacent RuvB subunits; this complex drives branch migration. In the full resolvosome a probable DNA-RuvA(4)-RuvB(12)-RuvC(2) complex forms which resolves the HJ.

Its subcellular location is the cytoplasm. The catalysed reaction is ATP + H2O = ADP + phosphate + H(+). In terms of biological role, the RuvA-RuvB-RuvC complex processes Holliday junction (HJ) DNA during genetic recombination and DNA repair, while the RuvA-RuvB complex plays an important role in the rescue of blocked DNA replication forks via replication fork reversal (RFR). RuvA specifically binds to HJ cruciform DNA, conferring on it an open structure. The RuvB hexamer acts as an ATP-dependent pump, pulling dsDNA into and through the RuvAB complex. RuvB forms 2 homohexamers on either side of HJ DNA bound by 1 or 2 RuvA tetramers; 4 subunits per hexamer contact DNA at a time. Coordinated motions by a converter formed by DNA-disengaged RuvB subunits stimulates ATP hydrolysis and nucleotide exchange. Immobilization of the converter enables RuvB to convert the ATP-contained energy into a lever motion, pulling 2 nucleotides of DNA out of the RuvA tetramer per ATP hydrolyzed, thus driving DNA branch migration. The RuvB motors rotate together with the DNA substrate, which together with the progressing nucleotide cycle form the mechanistic basis for DNA recombination by continuous HJ branch migration. Branch migration allows RuvC to scan DNA until it finds its consensus sequence, where it cleaves and resolves cruciform DNA. This is Holliday junction branch migration complex subunit RuvB from Bacillus cereus (strain ATCC 10987 / NRS 248).